The following is a 299-amino-acid chain: ATP phosphoribosyltransferase (299 aa).

It belongs to the ATP phosphoribosyltransferase family. Long subfamily. Equilibrium between an active dimeric form, an inactive hexameric form and higher aggregates. Interconversion between the various forms is largely reversible and is influenced by the natural substrates and inhibitors of the enzyme. Requires Mg(2+) as cofactor.

The protein resides in the cytoplasm. The enzyme catalyses 1-(5-phospho-beta-D-ribosyl)-ATP + diphosphate = 5-phospho-alpha-D-ribose 1-diphosphate + ATP. It functions in the pathway amino-acid biosynthesis; L-histidine biosynthesis; L-histidine from 5-phospho-alpha-D-ribose 1-diphosphate: step 1/9. Its activity is regulated as follows. Feedback inhibited by histidine. Catalyzes the condensation of ATP and 5-phosphoribose 1-diphosphate to form N'-(5'-phosphoribosyl)-ATP (PR-ATP). Has a crucial role in the pathway because the rate of histidine biosynthesis seems to be controlled primarily by regulation of HisG enzymatic activity. This Shigella flexneri serotype 5b (strain 8401) protein is ATP phosphoribosyltransferase.